Here is a 169-residue protein sequence, read N- to C-terminus: Lutropin/choriogonadotropin subunit beta (169 aa).

Residues 1 to 20 (MEMLQGLLLWMLLSVGGVWA) form the signal peptide. Intrachain disulfides connect C29–C77, C43–C92, C46–C130, C54–C108, C58–C110, and C113–C120. N33 carries N-linked (GlcNAc...) asparagine glycosylation. Positions 131–169 (APQTSSSCKDPPSQPLTSTSTPTPGASRRSSHPLPINTS) are disordered. Residues 145–158 (PLTSTSTPTPGASR) show a composition bias toward low complexity.

It belongs to the glycoprotein hormones subunit beta family. Heterodimer of a common alpha chain and a unique beta chain which confers biological specificity to thyrotropin, lutropin, follitropin and gonadotropin.

It is found in the secreted. Functionally, promotes spermatogenesis and ovulation by stimulating the testes and ovaries to synthesize steroids. The sequence is that of Lutropin/choriogonadotropin subunit beta (LHB) from Equus asinus (Donkey).